Consider the following 544-residue polypeptide: Phosphomannomutase (544 aa).

Residue Ser-145 is the Phosphoserine intermediate of the active site. Mg(2+) contacts are provided by Ser-145, Asp-297, Asp-299, and Asp-301.

The protein belongs to the phosphohexose mutase family. Requires Mg(2+) as cofactor.

The enzyme catalyses alpha-D-mannose 1-phosphate = D-mannose 6-phosphate. This is Phosphomannomutase (manB) from Mycoplasmoides pirum (Mycoplasma pirum).